Here is a 363-residue protein sequence, read N- to C-terminus: Phosphoserine aminotransferase (363 aa).

Arg-42 is an L-glutamate binding site. Residues 76–77, Trp-102, Thr-156, Asp-175, and Gln-198 each bind pyridoxal 5'-phosphate; that span reads GR. At Lys-199 the chain carries N6-(pyridoxal phosphate)lysine. A pyridoxal 5'-phosphate-binding site is contributed by 240-241; the sequence is NT.

Belongs to the class-V pyridoxal-phosphate-dependent aminotransferase family. SerC subfamily. As to quaternary structure, homodimer. Requires pyridoxal 5'-phosphate as cofactor.

The protein localises to the cytoplasm. The enzyme catalyses O-phospho-L-serine + 2-oxoglutarate = 3-phosphooxypyruvate + L-glutamate. It catalyses the reaction 4-(phosphooxy)-L-threonine + 2-oxoglutarate = (R)-3-hydroxy-2-oxo-4-phosphooxybutanoate + L-glutamate. Its pathway is amino-acid biosynthesis; L-serine biosynthesis; L-serine from 3-phospho-D-glycerate: step 2/3. It participates in cofactor biosynthesis; pyridoxine 5'-phosphate biosynthesis; pyridoxine 5'-phosphate from D-erythrose 4-phosphate: step 3/5. Functionally, catalyzes the reversible conversion of 3-phosphohydroxypyruvate to phosphoserine and of 3-hydroxy-2-oxo-4-phosphonooxybutanoate to phosphohydroxythreonine. The sequence is that of Phosphoserine aminotransferase from Shewanella halifaxensis (strain HAW-EB4).